The following is a 345-amino-acid chain: PI-PLC X domain-containing protein 1 (345 aa).

A PI-PLC X-box domain is found at 52–228 (QLWDVPLHHL…QVIVSYEDEA (177 aa)).

In terms of tissue distribution, expressed at highest levels in brain and kidney. Also detected in stomach, thymus and skeletal muscle.

It localises to the cytoplasm. The chain is PI-PLC X domain-containing protein 1 (Plcxd1) from Mus musculus (Mouse).